The chain runs to 253 residues: Negative modulator of initiation of replication (253 aa).

A disordered region spans residues 66–112 (SNQEQQTGHGHAGEPSAVQTPESNDYAKAQPHSSGYQPGQLEGHKSE). The segment at 154-155 (AV) is interaction with DNA.

It belongs to the SeqA family. In terms of assembly, homodimer. Polymerizes to form helical filaments.

The protein localises to the cytoplasm. Negative regulator of replication initiation, which contributes to regulation of DNA replication and ensures that replication initiation occurs exactly once per chromosome per cell cycle. Binds to pairs of hemimethylated GATC sequences in the oriC region, thus preventing assembly of replication proteins and re-initiation at newly replicated origins. Repression is relieved when the region becomes fully methylated. The polypeptide is Negative modulator of initiation of replication (Shewanella denitrificans (strain OS217 / ATCC BAA-1090 / DSM 15013)).